Reading from the N-terminus, the 392-residue chain is Na(+)/H(+) antiporter NhaA (392 aa).

Helical transmembrane passes span 17–37, 59–79, 95–115, 125–145, 154–174, 179–199, 213–233, 254–274, 290–310, 328–348, and 363–383; these read ILLI…LSAL, LILW…GLEV, IFPA…YLFF, GWAI…ALLG, VFLL…IALF, VALV…ILNW, FILW…GVIV, VLHP…NAGV, VGIA…FSWV, IFAV…IAGL, and LGIL…LNSV.

The protein belongs to the NhaA Na(+)/H(+) (TC 2.A.33) antiporter family.

The protein resides in the cell inner membrane. It carries out the reaction Na(+)(in) + 2 H(+)(out) = Na(+)(out) + 2 H(+)(in). Na(+)/H(+) antiporter that extrudes sodium in exchange for external protons. The protein is Na(+)/H(+) antiporter NhaA of Proteus mirabilis (strain HI4320).